A 304-amino-acid chain; its full sequence is Putative S-adenosyl-L-methionine-dependent methyltransferase YktD (304 aa).

Residues aspartate 134 and 163–164 (DF) contribute to the S-adenosyl-L-methionine site.

It belongs to the UPF0677 family.

May be involved in polyketide synthesis. This Bacillus subtilis (strain 168) protein is Putative S-adenosyl-L-methionine-dependent methyltransferase YktD (yktD).